Reading from the N-terminus, the 165-residue chain is uncharacterized protein (165 aa).

Residues methionine 1–lysine 38 are a coiled coil.

This is an uncharacterized protein from Bacillus subtilis (strain 168).